The following is a 504-amino-acid chain: Catalase (504 aa).

The signal sequence occupies residues 1–21 (MQMSKSFLLITVGLASTSLQA). Residues histidine 72 and asparagine 145 contribute to the active site. Tyrosine 353 lines the heme pocket.

This sequence belongs to the catalase family. Requires heme as cofactor.

It localises to the periplasm. The catalysed reaction is 2 H2O2 = O2 + 2 H2O. Decomposes hydrogen peroxide into water and oxygen; serves to protect cells from the toxic effects of hydrogen peroxide. This is Catalase from Vibrio parahaemolyticus serotype O3:K6 (strain RIMD 2210633).